Here is a 246-residue protein sequence, read N- to C-terminus: MAVTMRQMLEAGVHFGHQTRFWNPKMAPFIFGHRNKIHIINLEKTLPMFTDAQKYVRQLAANRGTILFVGTKRQSRDTIAQEAQRAGMPYVNARWLGGMMTNFKTLKVSIKRLKDMEAAVESGETEKMSKKEALLFEREIAKLQKSIGGVKDMGGIPDAIFVVDVGYHKIAVTEANKLGVPVIAVVDTNHSPEGVDYVIPGNDDSSKAVALYAEGVADAILEGRANAVNEVVQAARGDDEYVEENA.

Belongs to the universal ribosomal protein uS2 family.

This is Small ribosomal subunit protein uS2 from Burkholderia cenocepacia (strain HI2424).